The primary structure comprises 287 residues: Urease accessory protein UreD (287 aa).

It belongs to the UreD family. UreD, UreF and UreG form a complex that acts as a GTP-hydrolysis-dependent molecular chaperone, activating the urease apoprotein by helping to assemble the nickel containing metallocenter of UreC. The UreE protein probably delivers the nickel.

The protein localises to the cytoplasm. In terms of biological role, required for maturation of urease via the functional incorporation of the urease nickel metallocenter. In Aliivibrio fischeri (strain MJ11) (Vibrio fischeri), this protein is Urease accessory protein UreD.